The chain runs to 72 residues: Translation initiation factor IF-1 1 (72 aa).

In terms of domain architecture, S1-like spans 1–72; that stretch reads MAKEDRIEMQ…SRARIIFRAK (72 aa).

This sequence belongs to the IF-1 family. Component of the 30S ribosomal translation pre-initiation complex which assembles on the 30S ribosome in the order IF-2 and IF-3, IF-1 and N-formylmethionyl-tRNA(fMet); mRNA recruitment can occur at any time during PIC assembly.

The protein localises to the cytoplasm. Functionally, one of the essential components for the initiation of protein synthesis. Stabilizes the binding of IF-2 and IF-3 on the 30S subunit to which N-formylmethionyl-tRNA(fMet) subsequently binds. Helps modulate mRNA selection, yielding the 30S pre-initiation complex (PIC). Upon addition of the 50S ribosomal subunit IF-1, IF-2 and IF-3 are released leaving the mature 70S translation initiation complex. This chain is Translation initiation factor IF-1 1, found in Methylobacillus flagellatus (strain ATCC 51484 / DSM 6875 / VKM B-1610 / KT).